We begin with the raw amino-acid sequence, 125 residues long: Small ribosomal subunit protein uS12m (125 aa).

The protein belongs to the universal ribosomal protein uS12 family.

Its subcellular location is the mitochondrion. Its function is as follows. Protein S12 is involved in the translation initiation step. The protein is Small ribosomal subunit protein uS12m (RPS12) of Brassica napus (Rape).